The following is a 315-amino-acid chain: Methionyl-tRNA formyltransferase (315 aa).

Position 113–116 (113–116 (SILP)) interacts with (6S)-5,6,7,8-tetrahydrofolate.

This sequence belongs to the Fmt family.

The enzyme catalyses L-methionyl-tRNA(fMet) + (6R)-10-formyltetrahydrofolate = N-formyl-L-methionyl-tRNA(fMet) + (6S)-5,6,7,8-tetrahydrofolate + H(+). Its function is as follows. Attaches a formyl group to the free amino group of methionyl-tRNA(fMet). The formyl group appears to play a dual role in the initiator identity of N-formylmethionyl-tRNA by promoting its recognition by IF2 and preventing the misappropriation of this tRNA by the elongation apparatus. The sequence is that of Methionyl-tRNA formyltransferase from Vibrio parahaemolyticus serotype O3:K6 (strain RIMD 2210633).